The following is a 332-amino-acid chain: Ketol-acid reductoisomerase (NADP(+)) (332 aa).

In terms of domain architecture, KARI N-terminal Rossmann spans 2 to 182; it reads ANIYYDEDAS…GATRAGLIET (181 aa). NADP(+) contacts are provided by residues 25–28, S51, S53, and 83–86; these read YGSQ and DTVQ. H108 is an active-site residue. G134 is a binding site for NADP(+). Residues 183 to 327 form the KARI C-terminal knotted domain; the sequence is TFKEETETDL…KELRKMMPWL (145 aa). The Mg(2+) site is built by D191, E195, E227, and E231. S252 provides a ligand contact to substrate.

This sequence belongs to the ketol-acid reductoisomerase family. Mg(2+) is required as a cofactor.

It catalyses the reaction (2R)-2,3-dihydroxy-3-methylbutanoate + NADP(+) = (2S)-2-acetolactate + NADPH + H(+). The enzyme catalyses (2R,3R)-2,3-dihydroxy-3-methylpentanoate + NADP(+) = (S)-2-ethyl-2-hydroxy-3-oxobutanoate + NADPH + H(+). It participates in amino-acid biosynthesis; L-isoleucine biosynthesis; L-isoleucine from 2-oxobutanoate: step 2/4. Its pathway is amino-acid biosynthesis; L-valine biosynthesis; L-valine from pyruvate: step 2/4. Functionally, involved in the biosynthesis of branched-chain amino acids (BCAA). Catalyzes an alkyl-migration followed by a ketol-acid reduction of (S)-2-acetolactate (S2AL) to yield (R)-2,3-dihydroxy-isovalerate. In the isomerase reaction, S2AL is rearranged via a Mg-dependent methyl migration to produce 3-hydroxy-3-methyl-2-ketobutyrate (HMKB). In the reductase reaction, this 2-ketoacid undergoes a metal-dependent reduction by NADPH to yield (R)-2,3-dihydroxy-isovalerate. The protein is Ketol-acid reductoisomerase (NADP(+)) of Sulfurihydrogenibium sp. (strain YO3AOP1).